A 660-amino-acid polypeptide reads, in one-letter code: Bifunctional polymyxin resistance protein ArnA (660 aa).

The interval 1-304 (MKTVVFAYHD…TLGLVQGSRL (304 aa)) is formyltransferase ArnAFT. Residue 86–88 (HLI) coordinates (6R)-10-formyltetrahydrofolate. Histidine 104 functions as the Proton donor; for formyltransferase activity in the catalytic mechanism. (6R)-10-formyltetrahydrofolate is bound by residues arginine 114 and 136–140 (VKRAD). The tract at residues 314–660 (RRTRVLILGV…RTVDLTDKPS (347 aa)) is dehydrogenase ArnADH. NAD(+) contacts are provided by residues aspartate 347 and 368–369 (DI). UDP-alpha-D-glucuronate-binding positions include alanine 393, tyrosine 398, and 432 to 433 (TS). Glutamate 434 acts as the Proton acceptor; for decarboxylase activity in catalysis. UDP-alpha-D-glucuronate is bound by residues arginine 460, asparagine 492, 526-535 (KLIDGGKQKR), and tyrosine 613. Arginine 619 (proton donor; for decarboxylase activity) is an active-site residue.

In the N-terminal section; belongs to the Fmt family. UDP-L-Ara4N formyltransferase subfamily. This sequence in the C-terminal section; belongs to the NAD(P)-dependent epimerase/dehydratase family. UDP-glucuronic acid decarboxylase subfamily. As to quaternary structure, homohexamer, formed by a dimer of trimers.

It catalyses the reaction UDP-alpha-D-glucuronate + NAD(+) = UDP-beta-L-threo-pentopyranos-4-ulose + CO2 + NADH. It carries out the reaction UDP-4-amino-4-deoxy-beta-L-arabinose + (6R)-10-formyltetrahydrofolate = UDP-4-deoxy-4-formamido-beta-L-arabinose + (6S)-5,6,7,8-tetrahydrofolate + H(+). It participates in nucleotide-sugar biosynthesis; UDP-4-deoxy-4-formamido-beta-L-arabinose biosynthesis; UDP-4-deoxy-4-formamido-beta-L-arabinose from UDP-alpha-D-glucuronate: step 1/3. Its pathway is nucleotide-sugar biosynthesis; UDP-4-deoxy-4-formamido-beta-L-arabinose biosynthesis; UDP-4-deoxy-4-formamido-beta-L-arabinose from UDP-alpha-D-glucuronate: step 3/3. The protein operates within bacterial outer membrane biogenesis; lipopolysaccharide biosynthesis. Functionally, bifunctional enzyme that catalyzes the oxidative decarboxylation of UDP-glucuronic acid (UDP-GlcUA) to UDP-4-keto-arabinose (UDP-Ara4O) and the addition of a formyl group to UDP-4-amino-4-deoxy-L-arabinose (UDP-L-Ara4N) to form UDP-L-4-formamido-arabinose (UDP-L-Ara4FN). The modified arabinose is attached to lipid A and is required for resistance to polymyxin and cationic antimicrobial peptides. This Escherichia coli (strain SE11) protein is Bifunctional polymyxin resistance protein ArnA.